The sequence spans 75 residues: Psi-conotoxin PIIIE (75 aa).

The N-terminal stretch at 1–19 is a signal peptide; the sequence is MSKLGALLTICLLLFPITA. The propeptide occupies 20 to 50; the sequence is LLMDGDQPADRPAERMDYDISSEVHRLLERR. 4-hydroxyproline is present on residues Pro52, Pro53, and Pro64. Disulfide bonds link Cys54–Cys66, Cys55–Cys71, and Cys60–Cys72. The residue at position 74 (Gly74) is a Glycine amide.

In terms of tissue distribution, expressed by the venom duct.

The protein localises to the secreted. Psi-conotoxins act on postsynaptic membranes, and act as non-competitive antagonist of nicotinic acetylcholine receptors (nAChR). Is more toxic than Psi-conotoxin PIIIF. In vivo, has paralytic activity when injected intraperitoneally into goldfish. This chain is Psi-conotoxin PIIIE, found in Conus purpurascens (Purple cone).